The chain runs to 367 residues: DNA-directed RNA polymerase II subunit GRINL1A (367 aa).

A coiled-coil region spans residues 15–40 (DLERRSLAELREMLKRQERLLRNEKF). Positions 29–68 (KRQERLLRNEKFICKLPDKGKKIFDSFAKLKAAIAECEEV) are important for transcription repressor activity. 3 stretches are compositionally biased toward polar residues: residues 117 to 131 (SVDN…QNQG), 176 to 185 (RVSSQAEDTS), and 205 to 225 (GEQQ…SGTQ). Disordered stretches follow at residues 117–185 (SVDN…EDTS), 203–225 (DQGE…SGTQ), and 254–281 (PFRQ…RRDK). Residues 226–297 (KKPHYMEVLE…TAARLLPLHH (72 aa)) are interaction with Pol II. Phosphoserine is present on S269. Residues 298 to 313 (MPTQLLSIEESLALQK) form an important for transcription repressor activity region. Positions 300 to 329 (TQLLSIEESLALQKQRKQKYEEMQAKLAAQ) form a coiled coil. Residues 314–339 (QRKQKYEEMQAKLAAQKLAERLNIKM) form an interaction with Pol II region. Positions 335–367 (LNIKMRSYNPEGESSGRYREVRDEDDDWSSDEF) are disordered. Residues 357–367 (DEDDDWSSDEF) show a composition bias toward acidic residues.

This sequence belongs to the GRINL1 family. In terms of assembly, component of the Pol II(G) complex, which contains the RNA polymerase II (Pol II) core complex subunits and POLR2M isoform 1. Pol II(G) appears to be an abundant form of Pol II. Post-translationally, dephosphorylated at Ser-269 by the PNUTS-PP1 complex, promoting RNA polymerase II transcription pause-release.

It localises to the nucleus. Its function is as follows. Appears to be a stable component of the Pol II(G) complex form of RNA polymerase II (Pol II). Pol II synthesizes mRNA precursors and many functional non-coding RNAs and is the central component of the basal RNA polymerase II transcription machinery. May play a role in the Mediator complex-dependent regulation of transcription activation. Acts as a negative regulator of transcriptional activation; this repression is relieved by the Mediator complex, which restores Pol II(G) activator-dependent transcription to a level equivalent to that of Pol II. The protein is DNA-directed RNA polymerase II subunit GRINL1A (POLR2M) of Pongo abelii (Sumatran orangutan).